Here is a 146-residue protein sequence, read N- to C-terminus: 3-hydroxyacyl-[acyl-carrier-protein] dehydratase FabZ (146 aa).

Histidine 49 is an active-site residue.

This sequence belongs to the thioester dehydratase family. FabZ subfamily.

It localises to the cytoplasm. The catalysed reaction is a (3R)-hydroxyacyl-[ACP] = a (2E)-enoyl-[ACP] + H2O. Its function is as follows. Involved in unsaturated fatty acids biosynthesis. Catalyzes the dehydration of short chain beta-hydroxyacyl-ACPs and long chain saturated and unsaturated beta-hydroxyacyl-ACPs. This is 3-hydroxyacyl-[acyl-carrier-protein] dehydratase FabZ from Pseudomonas putida (strain ATCC 700007 / DSM 6899 / JCM 31910 / BCRC 17059 / LMG 24140 / F1).